The sequence spans 386 residues: Arginine biosynthesis bifunctional protein ArgJ (386 aa).

Positions 148, 170, 181, 261, 381, and 386 each coordinate substrate. Thr-181 (nucleophile) is an active-site residue.

It belongs to the ArgJ family. Heterotetramer of two alpha and two beta chains.

The protein resides in the cytoplasm. It catalyses the reaction N(2)-acetyl-L-ornithine + L-glutamate = N-acetyl-L-glutamate + L-ornithine. It carries out the reaction L-glutamate + acetyl-CoA = N-acetyl-L-glutamate + CoA + H(+). It participates in amino-acid biosynthesis; L-arginine biosynthesis; L-ornithine and N-acetyl-L-glutamate from L-glutamate and N(2)-acetyl-L-ornithine (cyclic): step 1/1. Its pathway is amino-acid biosynthesis; L-arginine biosynthesis; N(2)-acetyl-L-ornithine from L-glutamate: step 1/4. Functionally, catalyzes two activities which are involved in the cyclic version of arginine biosynthesis: the synthesis of N-acetylglutamate from glutamate and acetyl-CoA as the acetyl donor, and of ornithine by transacetylation between N(2)-acetylornithine and glutamate. This chain is Arginine biosynthesis bifunctional protein ArgJ, found in Corynebacterium diphtheriae (strain ATCC 700971 / NCTC 13129 / Biotype gravis).